Consider the following 186-residue polypeptide: FMN-dependent NADH:quinone oxidoreductase 1 (186 aa).

Residues 15–17 (SVS) and 81–84 (MYNF) contribute to the FMN site.

The protein belongs to the azoreductase type 1 family. Homodimer. The cofactor is FMN.

It carries out the reaction 2 a quinone + NADH + H(+) = 2 a 1,4-benzosemiquinone + NAD(+). The catalysed reaction is N,N-dimethyl-1,4-phenylenediamine + anthranilate + 2 NAD(+) = 2-(4-dimethylaminophenyl)diazenylbenzoate + 2 NADH + 2 H(+). Quinone reductase that provides resistance to thiol-specific stress caused by electrophilic quinones. Functionally, also exhibits azoreductase activity. Catalyzes the reductive cleavage of the azo bond in aromatic azo compounds to the corresponding amines. This is FMN-dependent NADH:quinone oxidoreductase 1 from Idiomarina loihiensis (strain ATCC BAA-735 / DSM 15497 / L2-TR).